Here is a 451-residue protein sequence, read N- to C-terminus: Mannan endo-1,6-alpha-mannosidase DFG5 (451 aa).

An N-terminal signal peptide occupies residues 1 to 21 (MVSLQQLTISILLLFTASVQS). Residues Asn-86, Asn-111, Asn-135, Asn-203, Asn-243, Asn-268, and Asn-402 are each glycosylated (N-linked (GlcNAc...) asparagine). The GPI-anchor amidated alanine moiety is linked to residue Ala-429. Positions 430 to 451 (GAGVLTAIVLAVILGGAIWMIF) are cleaved as a propeptide — removed in mature form.

This sequence belongs to the glycosyl hydrolase 76 family. The GPI-anchor is attached to the protein in the endoplasmic reticulum and serves to target the protein to the cell surface. There, the glucosamine-inositol phospholipid moiety is cleaved off and the GPI-modified mannoprotein is covalently attached via its lipidless GPI glycan remnant to the 1,6-beta-glucan of the outer cell wall layer. In terms of processing, N-mannosylated.

It is found in the secreted. The protein localises to the cell wall. It localises to the cell membrane. The catalysed reaction is Random hydrolysis of (1-&gt;6)-alpha-D-mannosidic linkages in unbranched (1-&gt;6)-mannans.. Its function is as follows. Required for normal synthesis of the cell wall and alkaline pH-induced hypha formation. The sequence is that of Mannan endo-1,6-alpha-mannosidase DFG5 (DFG5) from Candida albicans (strain SC5314 / ATCC MYA-2876) (Yeast).